The following is a 109-amino-acid chain: Nucleoid-associated protein Ssed_2851 (109 aa).

Belongs to the YbaB/EbfC family. In terms of assembly, homodimer.

It is found in the cytoplasm. It localises to the nucleoid. Its function is as follows. Binds to DNA and alters its conformation. May be involved in regulation of gene expression, nucleoid organization and DNA protection. The chain is Nucleoid-associated protein Ssed_2851 from Shewanella sediminis (strain HAW-EB3).